A 112-amino-acid chain; its full sequence is Integration host factor subunit alpha (112 aa).

The protein belongs to the bacterial histone-like protein family. As to quaternary structure, heterodimer of an alpha and a beta chain.

Its function is as follows. This protein is one of the two subunits of integration host factor, a specific DNA-binding protein that functions in genetic recombination as well as in transcriptional and translational control. The chain is Integration host factor subunit alpha from Rhizobium johnstonii (strain DSM 114642 / LMG 32736 / 3841) (Rhizobium leguminosarum bv. viciae).